A 76-amino-acid polypeptide reads, in one-letter code: UPF0154 protein LCA_1273 (76 aa).

Residues 3-23 traverse the membrane as a helical segment; it reads IGIGVLIFVIGALLGAVAGFF. Residues 55–76 form a disordered region; sequence PSEKKLNQMMSSMKAQQKRSKK.

The protein belongs to the UPF0154 family.

It is found in the cell membrane. The polypeptide is UPF0154 protein LCA_1273 (Latilactobacillus sakei subsp. sakei (strain 23K) (Lactobacillus sakei subsp. sakei)).